The primary structure comprises 198 residues: Dephospho-CoA kinase (198 aa).

The DPCK domain maps to 2–90; sequence LIAIVGKPGV…KLSLVTKPLL (89 aa). 10–15 lines the ATP pocket; that stretch reads GVGKTS.

The protein belongs to the CoaE family.

Its subcellular location is the cytoplasm. The catalysed reaction is 3'-dephospho-CoA + ATP = ADP + CoA + H(+). It participates in cofactor biosynthesis; coenzyme A biosynthesis; CoA from (R)-pantothenate: step 5/5. Its function is as follows. Catalyzes the phosphorylation of the 3'-hydroxyl group of dephosphocoenzyme A to form coenzyme A. This Mycoplasma genitalium (strain ATCC 33530 / DSM 19775 / NCTC 10195 / G37) (Mycoplasmoides genitalium) protein is Dephospho-CoA kinase.